Here is a 365-residue protein sequence, read N- to C-terminus: Selina-4(15),7(11)-diene synthase ((2E,6E)-farnesyl diphosphate cyclizing) (365 aa).

Asp82 and Glu87 together coordinate Mg(2+). Residues Asp82–Glu87 carry the DDXXXE motif motif. Substrate is bound at residue Arg178. Asn224 and Ser228 together coordinate Mg(2+). A substrate-binding site is contributed by Lys231. Position 232 (Glu232) interacts with Mg(2+). Residue Arg310–Tyr311 coordinates substrate.

The protein belongs to the terpene synthase family. In terms of assembly, monomer. The cofactor is Mg(2+).

The enzyme catalyses (2E,6E)-farnesyl diphosphate = selina-4(15),7(11)-diene + diphosphate. It participates in secondary metabolite biosynthesis; terpenoid biosynthesis. Functionally, catalyzes the conversion of (2E,6E)-farnesyl diphosphate (FPP) to yield the bicyclic sesquiterpene selina-4(15),7(11)-diene via a 1,10-cyclization, which requires the abstraction of the pyrophosphate from FPP leading to a (E,E)-germacradienyl cation. The only accepted substrate is (2E,6E)-farnesyl diphosphate (FPP). The sequence is that of Selina-4(15),7(11)-diene synthase ((2E,6E)-farnesyl diphosphate cyclizing) from Streptomyces pristinaespiralis (strain ATCC 25486 / DSM 40338 / CBS 914.69 / JCM 4507 / KCC S-0507 / NBRC 13074 / NRRL 2958 / 5647).